A 615-amino-acid polypeptide reads, in one-letter code: Filament-like plant protein 3 (615 aa).

Positions 1 to 18 (MDRRSWLWRRKSSEKSPG) are enriched in basic and acidic residues. Positions 1–55 (MDRRSWLWRRKSSEKSPGETESTGSVSSHSERFSDDQRSQSPELNSKPVTREEEA) are disordered. Polar residues predominate over residues 19-28 (ETESTGSVSS). Over residues 29–38 (HSERFSDDQR) the composition is skewed to basic and acidic residues. Residues 39–48 (SQSPELNSKP) are compositionally biased toward polar residues. Coiled-coil stretches lie at residues 87 to 121 (AEEA…LEDR) and 148 to 211 (EEAI…KSEE). Disordered stretches follow at residues 258–289 (DNSS…SPSE) and 319–343 (PHSE…HVNQ). Residues 262–288 (DLKSSIDNQSDYSGRVSFSDNEMQSPS) show a composition bias toward polar residues. The segment covering 322–343 (EPGRKHSESNKELEKSNAHVNQ) has biased composition (basic and acidic residues). Residues 327–563 (HSESNKELEK…KQELEHHQET (237 aa)) are a coiled coil.

It belongs to the FPP family. Interacts with WPP/MAF proteins. Binds to COG2; this interaction promotes the association between cortical microtubules and EXO70A1. In terms of tissue distribution, accumulates in preferentially xylem cells.

Its subcellular location is the vesicle. In terms of biological role, ensures, when in complex with COG2 and FPP2/VETH2, the correct secondary cell wall (SCW) deposition pattern by recruiting exocyst components to cortical microtubules in xylem cells during secondary cell wall deposition by recruiting EXO70A1. The protein is Filament-like plant protein 3 of Arabidopsis thaliana (Mouse-ear cress).